A 728-amino-acid polypeptide reads, in one-letter code: Homoaconitase, mitochondrial (728 aa).

The N-terminal 24 residues, Met1 to Tyr24, are a transit peptide targeting the mitochondrion. Residues Cys362, Cys422, and Cys425 each coordinate [4Fe-4S] cluster.

This sequence belongs to the aconitase/IPM isomerase family. The cofactor is [4Fe-4S] cluster.

The protein localises to the mitochondrion. It catalyses the reaction (2R,3S)-homoisocitrate = cis-homoaconitate + H2O. The protein operates within amino-acid biosynthesis; L-lysine biosynthesis via AAA pathway; L-alpha-aminoadipate from 2-oxoglutarate: step 3/5. Functionally, catalyzes the reversible hydration of cis-homoaconitate to (2R,3S)-homoisocitrate, a step in the alpha-aminoadipate pathway for lysine biosynthesis. The protein is Homoaconitase, mitochondrial (LYS4) of Cryptococcus neoformans var. neoformans serotype D (strain JEC21 / ATCC MYA-565) (Filobasidiella neoformans).